The primary structure comprises 249 residues: Tabinhibitin 4 (249 aa).

The signal sequence occupies residues 1–23 (MTLNVYFVLLSPYSLQSVPLPLT). Residues 31–33 (RGD) carry the Cell attachment site motif. The region spanning 64–207 (LQKTNWLRGV…LKRALFTCNF (144 aa)) is the SCP domain. The short motif at 220-222 (RGD) is the Cell attachment site element.

Belongs to the CRISP family. As to expression, expressed in salivary glands.

Its subcellular location is the secreted. In terms of biological role, inhibits platelet aggregation induced by all agonists tested (ADP, arachidonic acid, the thromboxane A2 analog U46619, thrombin, and snake venom snaclecs (TMVA that activates platelet through GPIB, and stejnulxin that specifically acts through GPVI (GP6))). May act by competing with fibrinogen for binding to glycoprotein IIb/IIIa (ITGA2B/ITGB3). This Tabanus yao (Horsefly) protein is Tabinhibitin 4.